Reading from the N-terminus, the 261-residue chain is MAHQSHAYHMVKPSPWPLTGALSALLTTSGLTMWFHFHSTTLLLTGLLTNALTMYQWWRDVVRESTYQGHHTLPVQKGLRYGMILFITSEVFFFAGFFWAFYHSSLAPTPQLGGHWPPTGIIPLNPLEVPLLNTSVLLASGVSITWAHHSLMENNRTQMIQALLITILLGIYFTLLQASEYIEAPFTISDGIYGSTFFMATGFHGLHVIIGSTFLTVCLARQLLFHFTSKHHFGFEAAAWYWHFVDVVWLFLYVSIYWWGS.

The Mitochondrial matrix segment spans residues 1–15 (MAHQSHAYHMVKPSP). A helical transmembrane segment spans residues 16–34 (WPLTGALSALLTTSGLTMW). The Mitochondrial intermembrane portion of the chain corresponds to 35–40 (FHFHST). The helical transmembrane segment at 41–66 (TLLLTGLLTNALTMYQWWRDVVREST) threads the bilayer. The Mitochondrial matrix portion of the chain corresponds to 67 to 72 (YQGHHT). A helical membrane pass occupies residues 73 to 105 (LPVQKGLRYGMILFITSEVFFFAGFFWAFYHSS). Residues 106 to 128 (LAPTPQLGGHWPPTGIIPLNPLE) lie on the Mitochondrial intermembrane side of the membrane. The helical transmembrane segment at 129-152 (VPLLNTSVLLASGVSITWAHHSLM) threads the bilayer. Residues 153–155 (ENN) are Mitochondrial matrix-facing. The helical transmembrane segment at 156–183 (RTQMIQALLITILLGIYFTLLQASEYIE) threads the bilayer. Residues 184–190 (APFTISD) are Mitochondrial intermembrane-facing. Residues 191 to 223 (GIYGSTFFMATGFHGLHVIIGSTFLTVCLARQL) traverse the membrane as a helical segment. The Mitochondrial matrix segment spans residues 224 to 232 (LFHFTSKHH). Residues 233 to 256 (FGFEAAAWYWHFVDVVWLFLYVSI) traverse the membrane as a helical segment. Over 257 to 261 (YWWGS) the chain is Mitochondrial intermembrane.

It belongs to the cytochrome c oxidase subunit 3 family. Component of the cytochrome c oxidase (complex IV, CIV), a multisubunit enzyme composed of 14 subunits. The complex is composed of a catalytic core of 3 subunits MT-CO1, MT-CO2 and MT-CO3, encoded in the mitochondrial DNA, and 11 supernumerary subunits COX4I, COX5A, COX5B, COX6A, COX6B, COX6C, COX7A, COX7B, COX7C, COX8 and NDUFA4, which are encoded in the nuclear genome. The complex exists as a monomer or a dimer and forms supercomplexes (SCs) in the inner mitochondrial membrane with NADH-ubiquinone oxidoreductase (complex I, CI) and ubiquinol-cytochrome c oxidoreductase (cytochrome b-c1 complex, complex III, CIII), resulting in different assemblies (supercomplex SCI(1)III(2)IV(1) and megacomplex MCI(2)III(2)IV(2)).

The protein resides in the mitochondrion inner membrane. It catalyses the reaction 4 Fe(II)-[cytochrome c] + O2 + 8 H(+)(in) = 4 Fe(III)-[cytochrome c] + 2 H2O + 4 H(+)(out). In terms of biological role, component of the cytochrome c oxidase, the last enzyme in the mitochondrial electron transport chain which drives oxidative phosphorylation. The respiratory chain contains 3 multisubunit complexes succinate dehydrogenase (complex II, CII), ubiquinol-cytochrome c oxidoreductase (cytochrome b-c1 complex, complex III, CIII) and cytochrome c oxidase (complex IV, CIV), that cooperate to transfer electrons derived from NADH and succinate to molecular oxygen, creating an electrochemical gradient over the inner membrane that drives transmembrane transport and the ATP synthase. Cytochrome c oxidase is the component of the respiratory chain that catalyzes the reduction of oxygen to water. Electrons originating from reduced cytochrome c in the intermembrane space (IMS) are transferred via the dinuclear copper A center (CU(A)) of subunit 2 and heme A of subunit 1 to the active site in subunit 1, a binuclear center (BNC) formed by heme A3 and copper B (CU(B)). The BNC reduces molecular oxygen to 2 water molecules using 4 electrons from cytochrome c in the IMS and 4 protons from the mitochondrial matrix. In Pongo abelii (Sumatran orangutan), this protein is Cytochrome c oxidase subunit 3 (MT-CO3).